The primary structure comprises 158 residues: Transcription elongation factor GreA (158 aa).

It belongs to the GreA/GreB family.

Functionally, necessary for efficient RNA polymerase transcription elongation past template-encoded arresting sites. The arresting sites in DNA have the property of trapping a certain fraction of elongating RNA polymerases that pass through, resulting in locked ternary complexes. Cleavage of the nascent transcript by cleavage factors such as GreA or GreB allows the resumption of elongation from the new 3'terminus. GreA releases sequences of 2 to 3 nucleotides. In Ruthia magnifica subsp. Calyptogena magnifica, this protein is Transcription elongation factor GreA.